The chain runs to 360 residues: Phospho-N-acetylmuramoyl-pentapeptide-transferase (360 aa).

The next 10 membrane-spanning stretches (helical) occupy residues 18–38 (VFSYLTLRAILGILTALMMSL), 73–93 (TMGGLLILAAIFTSTLLWADL), 97–117 (YVWATLFVIGSLGVVGFVDDY), 135–155 (FWQSVIALVVACALFFTSTQA), 168–188 (VLPQLGLFYIVITYFALVGTS), 199–219 (GLAIVPTILVAAALAIIAYLT), 236–256 (ASELVVVCTAIVGAGLGFLWF), 263–283 (VFMGDVGSLALGGALGIIAVL), 288–308 (LLLIIMGGVFVMEALSVILQV), and 339–359 (IVRFWIISIVLVLAGLATLKI).

It belongs to the glycosyltransferase 4 family. MraY subfamily. The cofactor is Mg(2+).

The protein resides in the cell inner membrane. The enzyme catalyses UDP-N-acetyl-alpha-D-muramoyl-L-alanyl-gamma-D-glutamyl-meso-2,6-diaminopimeloyl-D-alanyl-D-alanine + di-trans,octa-cis-undecaprenyl phosphate = di-trans,octa-cis-undecaprenyl diphospho-N-acetyl-alpha-D-muramoyl-L-alanyl-D-glutamyl-meso-2,6-diaminopimeloyl-D-alanyl-D-alanine + UMP. It participates in cell wall biogenesis; peptidoglycan biosynthesis. Its function is as follows. Catalyzes the initial step of the lipid cycle reactions in the biosynthesis of the cell wall peptidoglycan: transfers peptidoglycan precursor phospho-MurNAc-pentapeptide from UDP-MurNAc-pentapeptide onto the lipid carrier undecaprenyl phosphate, yielding undecaprenyl-pyrophosphoryl-MurNAc-pentapeptide, known as lipid I. This chain is Phospho-N-acetylmuramoyl-pentapeptide-transferase, found in Pseudoalteromonas translucida (strain TAC 125).